A 274-amino-acid polypeptide reads, in one-letter code: Serine/threonine-protein kinase 1 (274 aa).

The region spanning 16–273 is the Protein kinase domain; that stretch reads AVLAPKVVNG…HSFLASRHDY (258 aa). ATP-binding positions include 22-30 and K46; that span reads VVNGRFGKM. D134 serves as the catalytic Proton acceptor.

Belongs to the protein kinase superfamily. Ser/Thr protein kinase family.

The catalysed reaction is L-seryl-[protein] + ATP = O-phospho-L-seryl-[protein] + ADP + H(+). It catalyses the reaction L-threonyl-[protein] + ATP = O-phospho-L-threonyl-[protein] + ADP + H(+). This Orgyia pseudotsugata multicapsid polyhedrosis virus (OpMNPV) protein is Serine/threonine-protein kinase 1 (PK1).